Consider the following 296-residue polypeptide: Diaminopimelate epimerase (296 aa).

Residues Asn-17, Gln-49, and Asn-69 each contribute to the substrate site. Catalysis depends on Cys-78, which acts as the Proton donor. Residues Gly-79 to Asn-80, Asn-171, Asn-205, and Glu-223 to Arg-224 each bind substrate. The active-site Proton acceptor is Cys-232. Gly-233–Thr-234 provides a ligand contact to substrate.

It belongs to the diaminopimelate epimerase family. As to quaternary structure, homodimer.

It is found in the cytoplasm. The catalysed reaction is (2S,6S)-2,6-diaminopimelate = meso-2,6-diaminopimelate. The protein operates within amino-acid biosynthesis; L-lysine biosynthesis via DAP pathway; DL-2,6-diaminopimelate from LL-2,6-diaminopimelate: step 1/1. Its function is as follows. Catalyzes the stereoinversion of LL-2,6-diaminopimelate (L,L-DAP) to meso-diaminopimelate (meso-DAP), a precursor of L-lysine and an essential component of the bacterial peptidoglycan. This is Diaminopimelate epimerase from Methylorubrum populi (strain ATCC BAA-705 / NCIMB 13946 / BJ001) (Methylobacterium populi).